A 433-amino-acid polypeptide reads, in one-letter code: Enolase (433 aa).

Glutamine 167 is a (2R)-2-phosphoglycerate binding site. Glutamate 209 acts as the Proton donor in catalysis. Mg(2+) contacts are provided by aspartate 246, glutamate 291, and aspartate 318. (2R)-2-phosphoglycerate contacts are provided by lysine 343, arginine 372, serine 373, and lysine 394. Lysine 343 functions as the Proton acceptor in the catalytic mechanism.

Belongs to the enolase family. Component of the RNA degradosome, a multiprotein complex involved in RNA processing and mRNA degradation. Mg(2+) is required as a cofactor.

The protein localises to the cytoplasm. The protein resides in the secreted. It localises to the cell surface. It catalyses the reaction (2R)-2-phosphoglycerate = phosphoenolpyruvate + H2O. It participates in carbohydrate degradation; glycolysis; pyruvate from D-glyceraldehyde 3-phosphate: step 4/5. In terms of biological role, catalyzes the reversible conversion of 2-phosphoglycerate (2-PG) into phosphoenolpyruvate (PEP). It is essential for the degradation of carbohydrates via glycolysis. This chain is Enolase, found in Actinobacillus succinogenes (strain ATCC 55618 / DSM 22257 / CCUG 43843 / 130Z).